We begin with the raw amino-acid sequence, 85 residues long: uncharacterized protein (85 aa).

This is an uncharacterized protein from Enterobacteria phage T3 (Bacteriophage T3).